The primary structure comprises 649 residues: WEB family protein At5g55860 (649 aa).

Coiled coils occupy residues 59–227, 267–356, and 391–461; these read EKVL…ACSQ, EFAK…IESV, and TINQ…MSEK. A compositionally biased stretch (basic and acidic residues) spans 443-453; the sequence is EAKAAETKALE. Residues 443–483 form a disordered region; it reads EAKAAETKALEQIKSMSEKTNAARNSTSSESGSQSITLSQE. Residues 456-467 are compositionally biased toward polar residues; the sequence is KSMSEKTNAARN. Over residues 468–482 the composition is skewed to low complexity; that stretch reads STSSESGSQSITLSQ. Residues 505–549 adopt a coiled-coil conformation; it reads AALAQVEAVRASENETLKKLETTQEEIKKLKTATEEALKKAAMAD. The segment at 583–611 is disordered; the sequence is MKMASESSPQQHYKAPKQKPVNNKLEKTK.

Belongs to the WEB family.

This is WEB family protein At5g55860 from Arabidopsis thaliana (Mouse-ear cress).